Here is a 273-residue protein sequence, read N- to C-terminus: HTH-type transcriptional activator RhaS (273 aa).

The HTH araC/xylS-type domain maps to 174–272 (YQLLDWLQNN…SQSPRDLRSQ (99 aa)). 2 consecutive DNA-binding regions (H-T-H motif) follow at residues 191 to 212 (PELA…KNKT) and 239 to 262 (VTDI…KREF).

Binds DNA as a dimer.

It is found in the cytoplasm. Its function is as follows. Activates expression of the rhaBAD and rhaT operons. This chain is HTH-type transcriptional activator RhaS, found in Yersinia pestis bv. Antiqua (strain Antiqua).